The chain runs to 516 residues: uncharacterized protein (516 aa).

PFTB repeat units follow at residues 45-86 and 401-443; these read RQDA…QRAD and DERA…DGSE.

This is an uncharacterized protein from Bradyrhizobium diazoefficiens (strain JCM 10833 / BCRC 13528 / IAM 13628 / NBRC 14792 / USDA 110).